We begin with the raw amino-acid sequence, 155 residues long: D-aminoacyl-tRNA deacylase (155 aa).

A Gly-cisPro motif, important for rejection of L-amino acids motif is present at residues 137–138 (GP).

It belongs to the DTD family. As to quaternary structure, homodimer.

The protein resides in the cytoplasm. The enzyme catalyses glycyl-tRNA(Ala) + H2O = tRNA(Ala) + glycine + H(+). It catalyses the reaction a D-aminoacyl-tRNA + H2O = a tRNA + a D-alpha-amino acid + H(+). In terms of biological role, an aminoacyl-tRNA editing enzyme that deacylates mischarged D-aminoacyl-tRNAs. Also deacylates mischarged glycyl-tRNA(Ala), protecting cells against glycine mischarging by AlaRS. Acts via tRNA-based rather than protein-based catalysis; rejects L-amino acids rather than detecting D-amino acids in the active site. By recycling D-aminoacyl-tRNA to D-amino acids and free tRNA molecules, this enzyme counteracts the toxicity associated with the formation of D-aminoacyl-tRNA entities in vivo and helps enforce protein L-homochirality. This Nitrosococcus oceani (strain ATCC 19707 / BCRC 17464 / JCM 30415 / NCIMB 11848 / C-107) protein is D-aminoacyl-tRNA deacylase.